The chain runs to 712 residues: Zinc finger and BTB domain-containing protein 39 (712 aa).

Positions 30–96 (CDVTIVVGSR…VYTSELFTDL (67 aa)) constitute a BTB domain. Disordered regions lie at residues 129 to 162 (ARAK…LRGG), 176 to 224 (SDAG…IPSM), and 236 to 260 (GIQT…KNSF). The segment covering 134–147 (LTSTSESHSGTLSC) has biased composition (polar residues). Lysine 183 participates in a covalent cross-link: Glycyl lysine isopeptide (Lys-Gly) (interchain with G-Cter in SUMO2). Residues 372–394 (GNCKVCETHFQDRNSRVTHVLSH) form a C2H2-type 1 zinc finger. The segment at 400–422 (FSCDMCETKFFTQWQLTLHRRDG) adopts a C2H2-type 2; atypical zinc-finger fold. A Glycyl lysine isopeptide (Lys-Gly) (interchain with G-Cter in SUMO2) cross-link involves residue lysine 439. A C2H2-type 3; atypical zinc finger spans residues 480-502 (QACSVCDQRHLNLCSLMWHTLSH). 4 C2H2-type zinc fingers span residues 508 to 530 (FSCS…MAVH), 538 to 560 (FHCR…VSQH), 605 to 627 (YSCK…RRIH), and 633 to 655 (YQCK…LKTH). The segment at 661 to 683 (YRCTVCGHYSSTLNLMSKHVGVH) adopts a C2H2-type 8; atypical zinc-finger fold.

It belongs to the krueppel C2H2-type zinc-finger protein family.

The protein localises to the nucleus. In terms of biological role, may be involved in transcriptional regulation. The protein is Zinc finger and BTB domain-containing protein 39 (ZBTB39) of Homo sapiens (Human).